The following is a 101-amino-acid chain: Urease subunit beta (101 aa).

It belongs to the urease beta subunit family. As to quaternary structure, heterotrimer of UreA (gamma), UreB (beta) and UreC (alpha) subunits. Three heterotrimers associate to form the active enzyme.

The protein resides in the cytoplasm. It carries out the reaction urea + 2 H2O + H(+) = hydrogencarbonate + 2 NH4(+). Its pathway is nitrogen metabolism; urea degradation; CO(2) and NH(3) from urea (urease route): step 1/1. The polypeptide is Urease subunit beta (Burkholderia ambifaria (strain ATCC BAA-244 / DSM 16087 / CCUG 44356 / LMG 19182 / AMMD) (Burkholderia cepacia (strain AMMD))).